Consider the following 350-residue polypeptide: Methionine import ATP-binding protein MetN (350 aa).

Residues 2–241 (IQIKNLKKEY…PQAPVTRSFV (240 aa)) form the ABC transporter domain. An ATP-binding site is contributed by 38 to 45 (GHSGAGKS).

Belongs to the ABC transporter superfamily. Methionine importer (TC 3.A.1.24) family. As to quaternary structure, the complex is composed of two ATP-binding proteins (MetN), two transmembrane proteins (MetI) and a solute-binding protein (MetQ).

It is found in the cell inner membrane. It carries out the reaction L-methionine(out) + ATP + H2O = L-methionine(in) + ADP + phosphate + H(+). The enzyme catalyses D-methionine(out) + ATP + H2O = D-methionine(in) + ADP + phosphate + H(+). Functionally, part of the ABC transporter complex MetNIQ involved in methionine import. Responsible for energy coupling to the transport system. The sequence is that of Methionine import ATP-binding protein MetN from Francisella tularensis subsp. holarctica (strain LVS).